A 320-amino-acid chain; its full sequence is Probable protein adenylyltransferase aq_aa38 (320 aa).

Residues 76–206 enclose the Fido domain; that stretch reads VSEALILWIY…AIVVVEKLSR (131 aa). Residues 100–101, 157–159, and Arg-163 contribute to the ATP site; these read KS and GNG.

Belongs to the fic family.

It carries out the reaction L-tyrosyl-[protein] + ATP = O-(5'-adenylyl)-L-tyrosyl-[protein] + diphosphate. The enzyme catalyses L-threonyl-[protein] + ATP = 3-O-(5'-adenylyl)-L-threonyl-[protein] + diphosphate. In terms of biological role, probable adenylyltransferase that mediates the addition of adenosine 5'-monophosphate (AMP) to specific residues of target proteins. This chain is Probable protein adenylyltransferase aq_aa38, found in Aquifex aeolicus (strain VF5).